We begin with the raw amino-acid sequence, 221 residues long: Adenylate kinase (221 aa).

Position 10-15 (10-15 (GAGKGT)) interacts with ATP. An NMP region spans residues 30–59 (STGDMLRAAVKAGTPLGVEAKKVMDAGGLV). AMP-binding positions include T31, R36, 57 to 59 (GLV), 85 to 88 (GFPR), and Q92. Positions 122–159 (GRRVHVASGRTYHVKYNPPKTEGVDDETGEALIQRDDD) are LID. ATP contacts are provided by residues R123 and 132–133 (TY). 2 residues coordinate AMP: R156 and R167. G207 is an ATP binding site.

It belongs to the adenylate kinase family. As to quaternary structure, monomer.

The protein localises to the cytoplasm. The catalysed reaction is AMP + ATP = 2 ADP. It participates in purine metabolism; AMP biosynthesis via salvage pathway; AMP from ADP: step 1/1. Its function is as follows. Catalyzes the reversible transfer of the terminal phosphate group between ATP and AMP. Plays an important role in cellular energy homeostasis and in adenine nucleotide metabolism. This is Adenylate kinase from Cupriavidus necator (strain ATCC 17699 / DSM 428 / KCTC 22496 / NCIMB 10442 / H16 / Stanier 337) (Ralstonia eutropha).